Consider the following 550-residue polypeptide: Centrosomal and chromosomal factor (550 aa).

Coiled coils occupy residues 20-44, 105-126, and 239-274; these read SALS…QQHH, VANS…QQQQ, and ATSA…QQAH. 4 disordered regions span residues 21–145, 208–320, 361–380, and 392–465; these read ALSA…KDYS, LSSG…HAAN, SHYA…RDAM, and SGKL…SASV. Low complexity-rich tracts occupy residues 24 to 71, 81 to 136, and 221 to 320; these read ALQQ…QQQQ, ANTS…NAAP, and AAVA…HAAN. Composition is skewed to low complexity over residues 396-412 and 450-462; these read QQSQ…QQHC and SATP…SGGS.

Homodimer. Interacts with esc, Trl, E(z), scm and ph-p in vitro. Found in vivo in an esc-containing complex, which may be the Esc/E(z) complex. Also found in vivo in a Pc-containing complex that may be the PRC1 complex, but does not interact with Pc directly. Interacts with cyclin CycG.

It localises to the nucleus. Its subcellular location is the cytoplasm. It is found in the cytoskeleton. The protein localises to the microtubule organizing center. The protein resides in the centrosome. It localises to the chromosome. Its function is as follows. Essential protein required for proper condensation of mitotic chromosomes and progression through mitosis. Binds to specific polytene chromosome sites, many of which are shared with the posterior sex combs (Psc) protein. Involved in maintaining Abd-B repression outside its normal expression domain. This Drosophila melanogaster (Fruit fly) protein is Centrosomal and chromosomal factor (corto).